A 248-amino-acid polypeptide reads, in one-letter code: 1-(5-phosphoribosyl)-5-[(5-phosphoribosylamino)methylideneamino] imidazole-4-carboxamide isomerase (248 aa).

D7 functions as the Proton acceptor in the catalytic mechanism. Residue D131 is the Proton donor of the active site.

This sequence belongs to the HisA/HisF family.

The protein resides in the cytoplasm. The enzyme catalyses 1-(5-phospho-beta-D-ribosyl)-5-[(5-phospho-beta-D-ribosylamino)methylideneamino]imidazole-4-carboxamide = 5-[(5-phospho-1-deoxy-D-ribulos-1-ylimino)methylamino]-1-(5-phospho-beta-D-ribosyl)imidazole-4-carboxamide. It functions in the pathway amino-acid biosynthesis; L-histidine biosynthesis; L-histidine from 5-phospho-alpha-D-ribose 1-diphosphate: step 4/9. This Baumannia cicadellinicola subsp. Homalodisca coagulata protein is 1-(5-phosphoribosyl)-5-[(5-phosphoribosylamino)methylideneamino] imidazole-4-carboxamide isomerase.